The chain runs to 1305 residues: MADHQARQSGSSQRTVIPDPQLAKEKSNLTNYLRVFAYATRWDFCVYVVGALASIGVGVTMPLMNVVLGQLVGDFSDTVQDPYNMDLNNFKSMLQKQSLYIVGLFLGRWLLNSINKFCFRMIGIRLSSAIRHHYLRSLFAQSIHVIDSMPPGAAATAITATSNTLQIGVSERLGTFVTYVSTIIAAIAVAFTRSWSLTIVSASLLVYIAIIIAIVVPIYLKANAATLKADAQGTAVASEALQGIRLVNACGAHERIISKYSKWVTKAMERSQRVAPIIGAQTGLVFFGIFGVFGLAFWYGTQQFIHGVIKNVGVVIIVLTSVMLILFAFSYLEQPIMAISQAMVAATELFKVIDAPLPPMGSFTPDINSKDLIFKDVTFEYPSRPGARVLDGLSFRIQAGQNTALVGPSGSGKSTIVGLLERWYSLKHSPVLPEAATPRSSKEGERDNHDERKYERSTYEVPIMVPTNLTGALSGSISIGAHDLDDLEGKWWRAQIGLVQQEPFLFNSSIFENVANGLLGTVWENESEAKKRKMVQDACQEAYAHEFICRLPDAYDTRVGDGGAKLSGGQKQRIAIARSIVKRPQIMILDEATSAIDAKSEKIVQAALDRAIKTRTTITIAHRLSTIQKADHIVVLSKGRVVEEGTHKSLMEHENGVYYSLVEAQSLRLSTTDDTDSDLPATTYVAELKSAAVDIEQPLEVQNDEDNGPVVEPEVLRTLTQSFVKLLEGLRDQSSSFLLITIASMGVGAATPLQAWLFAKAVIVFISPSDDLKKEGDFWGFMWLALAGGVGVAYFFQCWISLRLQYHVGATTKQSYLRDMLYQELSFFDDDSRSSGTLIGRIAGDPKQVEGVFGLNLASATSSVFTIVGCLIISLTFGWKLGLVGLCVTVPIMMVSGFWKFRHELQFDQMNAAVFAESSQFASEAIGAMRTVSSLTMESAINNRYKQLLDGHVEAARRKAQWTAVIFGFAESATLGCQALILWYGGRLISSGEYSLEAFMVSYMAIINGVEYAGQILGVAPSAAQAAAAANRILDVQDSNRSSQEAEKSGPTVEDTDGGVEIELCNVSFKYPTRNVSIYKNLDLTIKKGQYAALVGPSGCGKTTIISLLERFYDLEPNHGEILWNGTNINDFGVYQYREHLSLVSQEPILFRGTIRDNILFGVADPSSVPEERIHEVCRDVFIHDVIVSLPDGYNTEVGAMSLSGGQKQRIAIARALIRNPKLLLLDEATSALDSESEKIVQAAFEKARKRRTMIAVAHRLATIQDADIIFVFDQGMVVEKGTHGELLQKRGIYWDMCQTQALDQ.

Residue N28 is glycosylated (N-linked (GlcNAc...) asparagine). A run of 6 helical transmembrane segments spans residues F44–M64, L99–F119, R172–T192, I199–Y219, I277–F297, and V312–L332. The 301-residue stretch at V48–E348 folds into the ABC transmembrane type-1 1 domain. Residues L372 to E663 form the ABC transporter 1 domain. Position 407 to 414 (G407 to S414) interacts with ATP. The segment at E434 to Y454 is disordered. The span at S440–Y454 shows a compositional bias: basic and acidic residues. N-linked (GlcNAc...) asparagine glycosylation is found at N468, N507, and N525. Transmembrane regions (helical) follow at residues F737–L757, G780–I800, G851–I873, F877–W899, A964–Y984, and F999–V1019. Positions L738–Q1025 constitute an ABC transmembrane type-1 2 domain. The interval D1038–D1057 is disordered. N-linked (GlcNAc...) asparagine glycosylation is found at N1040, N1066, and N1075. Residues I1062 to T1300 enclose the ABC transporter 2 domain. G1096–T1103 is a binding site for ATP. A glycan (N-linked (GlcNAc...) asparagine) is linked at N1125.

Belongs to the ABC transporter superfamily. ABCB family. Multidrug resistance exporter (TC 3.A.1.201) subfamily.

It is found in the membrane. In terms of biological role, ABC transporter; part of the gene cluster that mediates the biosynthesis of the lipopeptides W493 A and B. W493 A and B consist of six amino acid residues D-allo-thr, L-Ala, D-Ala, L-Gln, D-Tyr, and L-Val/L-Ile linked to a 3-hydroxy-4-methyltetradecanoic acid polyketide chain. May be involved in excretion or internal transport of W493 A and B. This chain is ABC transporter FPSE_09185, found in Fusarium pseudograminearum (strain CS3096) (Wheat and barley crown-rot fungus).